A 185-amino-acid polypeptide reads, in one-letter code: Inner membrane-spanning protein YciB (185 aa).

The next 5 membrane-spanning stretches (helical) occupy residues 27–47 (IVLVVATILQIVILKWKYGIV), 53–73 (IMASAVVFFGLLTAYFNEIRY), 76–96 (WKVTIINGLFAIVLLVAQFQF), 118–138 (TLNLGWALFFIICMLVNIYIS), and 149–169 (FKSFGIIGMTVIATIISGVYI).

It belongs to the YciB family.

It localises to the cell inner membrane. Functionally, plays a role in cell envelope biogenesis, maintenance of cell envelope integrity and membrane homeostasis. The chain is Inner membrane-spanning protein YciB from Haemophilus influenzae (strain 86-028NP).